Here is a 363-residue protein sequence, read N- to C-terminus: Aspartate carbamoyltransferase, chloroplastic (363 aa).

The tract at residues 1–21 (MAAARATLPLPRVPAPSPRPQ) is disordered. The N-terminal 36 residues, 1 to 36 (MAAARATLPLPRVPAPSPRPQLRPFPSLPARRGAVA), are a transit peptide targeting the chloroplast. The span at 11-21 (PRVPAPSPRPQ) shows a compositional bias: pro residues. Carbamoyl phosphate-binding residues include R109 and T110. 2 residues coordinate UMP: R109 and T110. Position 139 (K139) interacts with L-aspartate. Carbamoyl phosphate-binding residues include R160, H188, and Q191. The UMP site is built by R160 and H188. UMP is bound by residues R221 and R283. L-aspartate-binding residues include R221 and R283. Carbamoyl phosphate contacts are provided by L323 and P324.

It belongs to the aspartate/ornithine carbamoyltransferase superfamily. ATCase family. Homotrimer.

The protein resides in the plastid. It is found in the chloroplast. The catalysed reaction is carbamoyl phosphate + L-aspartate = N-carbamoyl-L-aspartate + phosphate + H(+). It functions in the pathway pyrimidine metabolism; UMP biosynthesis via de novo pathway; (S)-dihydroorotate from bicarbonate: step 2/3. Its activity is regulated as follows. Feedback inhibited by UMP. Functionally, catalyzes the condensation of carbamoyl phosphate and aspartate to form carbamoyl aspartate and inorganic phosphate, the committed step in the de novo pyrimidine nucleotide biosynthesis pathway. This chain is Aspartate carbamoyltransferase, chloroplastic (PYRB), found in Oryza sativa subsp. japonica (Rice).